A 382-amino-acid polypeptide reads, in one-letter code: Sphingoid long-chain base transporter RSB1 (382 aa).

Topologically, residues 1-34 are extracellular; the sequence is MSNATNNTLGSLLPQLEAAANSNSLYGGMVPNLR. Residues Asn3 and Asn6 are each glycosylated (N-linked (GlcNAc...) asparagine). A helical membrane pass occupies residues 35 to 55; the sequence is FNITMIVIWGILLTIHVVQLL. Residues 56–57 are Cytoplasmic-facing; it reads MR. A helical membrane pass occupies residues 58–78; the sequence is QYWFSIAFICTGILEVLGFIG. The Extracellular segment spans residues 79-90; that stretch reads RTWSHSNVADMD. The helical transmembrane segment at 91–111 threads the bilayer; that stretch reads AFLLNMICLTIAPVFTMGGIY. The Cytoplasmic segment spans residues 112–135; that stretch reads YQLAKLIEVYGHRFSLLPSPMAYS. Residues 136–156 traverse the membrane as a helical segment; sequence FIFICSDIVSLVVQAVGGGLC. Over 157–171 the chain is Extracellular; the sequence is GVAVTDGTSTTTGNH. A helical transmembrane segment spans residues 172 to 192; the sequence is VFIAGLAIQVASMAIFLMLWF. The Cytoplasmic portion of the chain corresponds to 193 to 241; the sequence is HFLFRIYISVRWEHINSRPISLSLLKISQTEVDYLYREKFHFLRLEPKR. A helical membrane pass occupies residues 242 to 262; sequence WVFHYFNLAMTVAVLTIFTRC. Residues 263-281 lie on the Extracellular side of the membrane; the sequence is CYRLAELVVGWDGYLITHE. The chain crosses the membrane as a helical span at residues 282 to 302; the sequence is WYFIILDALMMAIATVTLTIF. Topologically, residues 303-382 are cytoplasmic; that stretch reads HPGFAFKGRS…LFSSKKKAKL (80 aa).

The protein belongs to the lipid-translocating exporter (LTE) (TC 9.A.26.1) family.

Its subcellular location is the cell membrane. Catalyzes the ATP-dependent translocation of sphingoid long-chain bases (LCBs) from the cytoplasmic site toward the extracytoplasmic side of the membrane (flip-flop). Involved in the establishment of the functional lipid asymmetry of the plasma membrane. Regulates intracellular levels of LCBs, sphingolipid precursors that are growth inhibitory at increased levels. This chain is Sphingoid long-chain base transporter RSB1 (RSB1), found in Saccharomyces cerevisiae (strain AWRI1631) (Baker's yeast).